The chain runs to 903 residues: MLIPSKLSRPVRLQNTVVRDRLLVKLSSAANYRLTLINCPAGYGKTTLIAQWAADQSNLGWYSLDESDNQSERFATYLIAAIQLATGGHCSKSEALSQKHQYANLSALFSQLFIELSNWDGPLYLVIDDYHLITNDAIHEAMRFFLRHQPENLTLIILSRTLPSLGIANLRVRDQLLELGMQQLAFNHHEAQQFFECRLSSPLEQGDSSRLCDEVEGWVTALQLIALSSRQPNSSAQKSAKRLAGLNASHLSDYLVDEVLDQVDSKARAFLLRCSVLRSMNDALIVRLTGEDNGQQLLEELERQGLFIHRMDDSAEWFCFHPLFATFLRQRCQWELALELPELHHAAAEGWMALGYPAEAIHHALAAGDVGMLRDILLQHAWSLFHHSELALLEQCLTALPYPLLVQNPELALLQAWLAQSQHRYSEVNTLLEQAELAMQERKIPVDEILRAEFGALRAQVAINAGKPDEAEKLATDALKYLPMAHYYSRIVATSVTGEVHHCKGELARALPMMQQTEQMARRHEAYHYALWALLQQSEILIAQGFLQAAYETQEKAFELIREQHLEQLPMHEFLLRIRSQVLWSWSRLDEAEEAARKGVEILANYQPQQQLQCLAMLAKCSLARGDLDNANVYIQRCEALQHGSQYHLDWITNADKPRVIHWQMTGDKVAAASWLRQTEKPGMADNHFLQGQWRNIARVQIILGRFDEAEVVLDELNENARRLRLTSDLNRNLLLSNTLYWQTERKGEAQKALIESLTLANRTGFISHFVIEGEAMAQQLRQLIQLNALPELEQHRAQRILKDINQHHRHKFAHFDEIFVDKLLTHPQVPELIRTSPLTQREWQVLGLIYSGYSNDQIANELDVAATTIKTHIRNLYQKLGVAHRQEAVQQAQRLLQMMGYV.

ATP is bound at residue 39-46 (CPAGYGKT). An HTH luxR-type domain is found at 832–897 (ELIRTSPLTQ…EAVQQAQRLL (66 aa)). The H-T-H motif DNA-binding region spans 856-875 (NDQIANELDVAATTIKTHIR).

Belongs to the MalT family. As to quaternary structure, monomer in solution. Oligomerizes to an active state in the presence of the positive effectors ATP and maltotriose.

Activated by ATP and maltotriose, which are both required for DNA binding. Functionally, positively regulates the transcription of the maltose regulon whose gene products are responsible for uptake and catabolism of malto-oligosaccharides. Specifically binds to the promoter region of its target genes, recognizing a short DNA motif called the MalT box. In Yersinia pseudotuberculosis serotype O:1b (strain IP 31758), this protein is HTH-type transcriptional regulator MalT.